A 411-amino-acid polypeptide reads, in one-letter code: Adherens junction-associated protein 1 (411 aa).

Residues 1–43 (MWIQQLLGLSSMPIRWPGRSLGSHLWILIAMLQLAVDFPSCDS) form the signal peptide. The Extracellular portion of the chain corresponds to 44–283 (LGPGPEFRLL…GETSGLAVHQ (240 aa)). 3 stretches are compositionally biased toward low complexity: residues 62–76 (LWSLRTGPPTRLPTP), 121–145 (PPAATRSSPSLTSASASSSMTAGAA), and 247–264 (TPVGVSTTEPSTSPSNNG). Disordered stretches follow at residues 62 to 156 (LWSL…RGRR) and 242 to 270 (DPWKRTPVGVSTTEPSTSPSNNGKDIQPP). A helical transmembrane segment spans residues 284-304 (IITITVSLIMVIAALITTLVL). The segment at 304–411 (LKNCCAPSGH…VSEKWFEISC (108 aa)) is targeting signals. The Cytoplasmic portion of the chain corresponds to 305–411 (KNCCAPSGHT…VSEKWFEISC (107 aa)).

As to quaternary structure, forms a complex with CDH1 and CTNNB1; interacts directly with CTNNB1. Interacts with AP1M2 and with isoform 2 of BSG/CD147.

It localises to the basolateral cell membrane. The protein resides in the apical cell membrane. Its subcellular location is the cell junction. It is found in the adherens junction. Its function is as follows. Plays a role in cell adhesion and cell migration. The protein is Adherens junction-associated protein 1 (Ajap1) of Rattus norvegicus (Rat).